The chain runs to 1577 residues: MASVGLEKVNILGRDSIHVGYDLRAHIARTVFESCVSSTYVVVSDANVARVPYHEALCAALEEGLPARSRMLRYVVQPGETYKTRETKGEIEDFMLAEGCTRDTVVLAVGGGVIGDMVGFVAATFMRGVRFVQVPTSLLAMVDSSIGGKTAVDTPAGKNFIGSFWQPEFVFVDVKWLETLPRREFINGMAEVIKTACIWNAAEFMRLEMHASMFLQVVNSSKQVKVDTKGGPTSLSYTNITQILDHVFQLVLESIKVKAHVVSSDERESGLRNLLNFGHSIGHAYEALLTPQALHGECVSIGMVKEAELSRYLNILSPTQVARLTKVLSAYGLPTSVNEGWFRELTLGKRTPLEVLLRKMSIDKKNDGSNKKVVLLETIGKCYGTSAHVVSDTDLRFVLTDEALVYPFTDVRSSTGHTIVPPGSKSISNRALILAALGKGKCRIRNLLHSDDTKHMLEAVQQLNAATISWEDNGDTVVIDGHGGRTLTASDLPLYLGNAGTASRFLASVASLVCPEGNRDSVILTGNARMQERPIGPLVESLRLNGVRVDYLNREGSLPIKVHAESKFRGGRINLEASISSQYVSSILMCAPYAEEPVTLSLDGKPISELYIEMTIRMMEKFGIKVEKSNDELYTYHIPRGQYVNPAEYVIESDASSATYPLAFAALTGTTVTIPNIGHDSLQGDSRFACDVLKPMGCTVQQTATSTTVTGPEPGTLKPLEHVDMEPMTDAFLTACVVAAAAHSPESKCKNIITITGIANQRVKECNRILAMVTQLSKFGVTAEELPDGIQVHGVEQLSQLKVPDAVETYDDHRVAMSFSLLAGMVNYGQAPSSCRPIKILERRCTGKTWPGWWDVLHSRLGATLDGNEPLPEKENDIRKSVVLIGMRAAGKSTVGRWCAEALGYKLLDLDDEFQTYFGMGTVKEFVAQNGWESFRSKETDLFGHVLNKYSRSGYVISTGGGIVETASSRKLLQDFAATGGVVLHLYRDIDETIKFLRTDPTRPAYIEEVRGVWDRREKWYHLCSSYSFFSPHCSTTAEFEGLRRVFSKFIRRITGMLPVEVPVKRSTFVCLTFQNLLPEMERIKEAVYGCEAVEVRVDHLENYSQDFVLKQLTALRLATDSLPIVFTIRTKKQGGKFLDNDYSTLEDLLTVGLKAGVEFLDLELTLPSPIHQRILNKRYKTRIIGSHHDFSGEFSWEHPEWEHRYAQALAMQVDAIKFVATAKGFGDNLSLEEFRSKHTDKPLIAINMRECGKLSRVLNTILTPITSDVLPQAAAPGQLTLRQINELYASIGGLRPKKMFVVGSPIGHSRSPILHNTGYNSLGLPYTFDKFETDSAEIVKKSLLSREDLGGIAVTIPLKQDIMQYLDELTDSAKCIGAVNTIIPKKDGRFIGHNTDWLGIKNSLIANGVPEHVNTAGLIVGSGGTARAAAYAFHEMQCSTIYMINRTTSNLTELQKSFPQEFNIHVIESLEQIEQLSEPVGIAVSCVPSDKPLDDALSQKLSAFLSRPSATNFIPTILDAAYKPLVTPVLKLASEVHGWRPVSGAQMLVHQGVAQFEIWTGFKAPFAPVYDAVTQE.

The interval 1–392 (MASVGLEKVN…YGTSAHVVSD (392 aa)) is 3-dehydroquinate synthase. Residues 80–83 (ETYK), 111–113 (GGV), and Asp-116 contribute to the NAD(+) site. Arg-127 lines the 7-phospho-2-dehydro-3-deoxy-D-arabino-heptonate pocket. Residue 136–137 (TS) coordinates NAD(+). The 7-phospho-2-dehydro-3-deoxy-D-arabino-heptonate site is built by Asp-143 and Lys-149. Lys-158 provides a ligand contact to NAD(+). Residue Asn-159 participates in 7-phospho-2-dehydro-3-deoxy-D-arabino-heptonate binding. NAD(+) is bound by residues 176–179 (WLET) and Asn-187. Residue Glu-191 coordinates Zn(2+). 7-phospho-2-dehydro-3-deoxy-D-arabino-heptonate contacts are provided by residues 191–194 (EVIK) and Lys-258. Catalysis depends on Glu-268, which acts as the Proton acceptor; for 3-dehydroquinate synthase activity. 7-phospho-2-dehydro-3-deoxy-D-arabino-heptonate-binding positions include 272-276 (RNLLN) and His-279. Position 279 (His-279) interacts with Zn(2+). His-283 (proton acceptor; for 3-dehydroquinate synthase activity) is an active-site residue. Positions 295 and 364 each coordinate 7-phospho-2-dehydro-3-deoxy-D-arabino-heptonate. Position 295 (His-295) interacts with Zn(2+). Positions 405-863 (VYPFTDVRSS…WDVLHSRLGA (459 aa)) are EPSP synthase. The active-site For EPSP synthase activity is the Cys-845. The interval 882–1071 (VVLIGMRAAG…VPVKRSTFVC (190 aa)) is shikimate kinase. An ATP-binding site is contributed by 886-893 (GMRAAGKS). Positions 1072–1284 (LTFQNLLPEM…AAPGQLTLRQ (213 aa)) are 3-dehydroquinase. The active-site Proton acceptor; for 3-dehydroquinate dehydratase activity is His-1189. The active-site Schiff-base intermediate with substrate; for 3-dehydroquinate dehydratase activity is Lys-1218. The interval 1297 to 1577 (PKKMFVVGSP…APVYDAVTQE (281 aa)) is shikimate dehydrogenase.

It in the N-terminal section; belongs to the sugar phosphate cyclases superfamily. Dehydroquinate synthase family. The protein in the 2nd section; belongs to the EPSP synthase family. In the 3rd section; belongs to the shikimate kinase family. This sequence in the 4th section; belongs to the type-I 3-dehydroquinase family. It in the C-terminal section; belongs to the shikimate dehydrogenase family. Homodimer. The cofactor is Zn(2+).

The protein localises to the cytoplasm. The catalysed reaction is 7-phospho-2-dehydro-3-deoxy-D-arabino-heptonate = 3-dehydroquinate + phosphate. The enzyme catalyses 3-dehydroquinate = 3-dehydroshikimate + H2O. It carries out the reaction shikimate + NADP(+) = 3-dehydroshikimate + NADPH + H(+). It catalyses the reaction shikimate + ATP = 3-phosphoshikimate + ADP + H(+). The catalysed reaction is 3-phosphoshikimate + phosphoenolpyruvate = 5-O-(1-carboxyvinyl)-3-phosphoshikimate + phosphate. It participates in metabolic intermediate biosynthesis; chorismate biosynthesis; chorismate from D-erythrose 4-phosphate and phosphoenolpyruvate: step 2/7. The protein operates within metabolic intermediate biosynthesis; chorismate biosynthesis; chorismate from D-erythrose 4-phosphate and phosphoenolpyruvate: step 3/7. It functions in the pathway metabolic intermediate biosynthesis; chorismate biosynthesis; chorismate from D-erythrose 4-phosphate and phosphoenolpyruvate: step 4/7. Its pathway is metabolic intermediate biosynthesis; chorismate biosynthesis; chorismate from D-erythrose 4-phosphate and phosphoenolpyruvate: step 5/7. It participates in metabolic intermediate biosynthesis; chorismate biosynthesis; chorismate from D-erythrose 4-phosphate and phosphoenolpyruvate: step 6/7. The AROM polypeptide catalyzes 5 consecutive enzymatic reactions in prechorismate polyaromatic amino acid biosynthesis. This is Pentafunctional AROM polypeptide from Eremothecium gossypii (strain ATCC 10895 / CBS 109.51 / FGSC 9923 / NRRL Y-1056) (Yeast).